The chain runs to 315 residues: MRLLAPAKINLALDVLGRRADGYHQVVMVMQTIALADTVTVAVNEGHGAIRLAGGTEEAPPDADNLVYRAAQLVRETAGLSCGVDIDLEKVIPVAAGLAGGSSDAAATVKALNRLFRLGWSDREMETLLARLGSDIPFLVRGGTALATGRGEIVHRLPPAPAFWVVLVKPPFGASTPKVYKALGAPALPDPLPWPQAMKPATTPPGTAAYRMIEALKTGDYGNVLEALGNDLEQVTLEWHPVLKEIKVQLTRFGCDRALMSGSGPTILGFTASEATARSVAAAMEEQWGPQRYRVLIARTLEREEADEWNVDCCR.

Lys-8 is an active-site residue. 93 to 103 (PVAAGLAGGSS) serves as a coordination point for ATP. The active site involves Asp-135.

Belongs to the GHMP kinase family. IspE subfamily.

The enzyme catalyses 4-CDP-2-C-methyl-D-erythritol + ATP = 4-CDP-2-C-methyl-D-erythritol 2-phosphate + ADP + H(+). Its pathway is isoprenoid biosynthesis; isopentenyl diphosphate biosynthesis via DXP pathway; isopentenyl diphosphate from 1-deoxy-D-xylulose 5-phosphate: step 3/6. Its function is as follows. Catalyzes the phosphorylation of the position 2 hydroxy group of 4-diphosphocytidyl-2C-methyl-D-erythritol. The chain is 4-diphosphocytidyl-2-C-methyl-D-erythritol kinase from Heliobacterium modesticaldum (strain ATCC 51547 / Ice1).